The primary structure comprises 552 residues: Protein FAM234A (552 aa).

The Cytoplasmic portion of the chain corresponds to 1–48; that stretch reads MTDGKDLEAEIHPLKSENRKVPENAGALAGKEPRGTPAPQTRLSHCRT. Residues 49–69 traverse the membrane as a helical; Signal-anchor for type II membrane protein segment; it reads AAFFLSLFACLLVVFVVSFII. Topologically, residues 70–552 are extracellular; sequence PCPDRPALQG…LSRLRYRSEA (483 aa). N-linked (GlcNAc...) asparagine glycosylation is found at Asn-115, Asn-238, and Asn-473.

Belongs to the FAM234 family.

The protein resides in the membrane. The protein is Protein FAM234A (FAM234A) of Bos taurus (Bovine).